The sequence spans 249 residues: 3-deoxy-D-manno-octulosonic acid kinase (249 aa).

Residue Asp-175 is part of the active site.

This sequence belongs to the protein kinase superfamily. KdkA/RfaP family.

It is found in the cell inner membrane. The enzyme catalyses an alpha-Kdo-(2-&gt;6)-lipid IVA + ATP = a 4-O-phospho-alpha-Kdo-(2-&gt;6)-lipid IVA + ADP + H(+). It participates in bacterial outer membrane biogenesis; LPS core biosynthesis. Its function is as follows. Catalyzes the ATP-dependent phosphorylation of the 3-deoxy-D-manno-octulosonic acid (Kdo) residue in Kdo-lipid IV(A) at the 4-OH position. This Xanthomonas oryzae pv. oryzae (strain PXO99A) protein is 3-deoxy-D-manno-octulosonic acid kinase.